The primary structure comprises 70 residues: Brevinin-1PLc (70 aa).

The N-terminal stretch at 1–22 (MFTLKKSMLLLFFLGTINLSLC) is a signal peptide. Positions 23 to 44 (EEERNAEEERRDEPDEMDVEVE) are excised as a propeptide. C64 and C70 are disulfide-bonded.

Expressed by the skin glands.

Its subcellular location is the secreted. Functionally, antimicrobial activity against the Gram-negative bacterium E.coli, the Gram-positive bacterium S.aureus and the yeast C.albicans. This is Brevinin-1PLc from Lithobates palustris (Pickerel frog).